The following is a 446-amino-acid chain: tRNA modification GTPase MnmE (446 aa).

Residues arginine 22, glutamate 80, and lysine 119 each coordinate (6S)-5-formyl-5,6,7,8-tetrahydrofolate. The 156-residue stretch at 215-370 folds into the TrmE-type G domain; it reads GLSLVIAGRP…LKKVIKQVVG (156 aa). Position 225 (asparagine 225) interacts with K(+). GTP contacts are provided by residues 225–230, 244–250, and 269–272; these read NAGKST, TEIAGTT, and DTAG. Serine 229 contributes to the Mg(2+) binding site. Positions 244, 246, and 249 each coordinate K(+). Threonine 250 provides a ligand contact to Mg(2+). Residue lysine 446 participates in (6S)-5-formyl-5,6,7,8-tetrahydrofolate binding.

It belongs to the TRAFAC class TrmE-Era-EngA-EngB-Septin-like GTPase superfamily. TrmE GTPase family. In terms of assembly, homodimer. Heterotetramer of two MnmE and two MnmG subunits. The cofactor is K(+).

It is found in the cytoplasm. In terms of biological role, exhibits a very high intrinsic GTPase hydrolysis rate. Involved in the addition of a carboxymethylaminomethyl (cmnm) group at the wobble position (U34) of certain tRNAs, forming tRNA-cmnm(5)s(2)U34. This chain is tRNA modification GTPase MnmE, found in Legionella pneumophila (strain Corby).